We begin with the raw amino-acid sequence, 524 residues long: Acetyl-CoA hydrolase (524 aa).

CoA is bound at residue 279-283; sequence GIGNI. Residue Glu-304 is the 5-glutamyl coenzyme A thioester intermediate of the active site. CoA is bound at residue Gly-398.

The protein belongs to the acetyl-CoA hydrolase/transferase family.

Its subcellular location is the cytoplasm. It carries out the reaction acetyl-CoA + H2O = acetate + CoA + H(+). Presumably involved in regulating the intracellular acetyl-CoA pool for fatty acid and cholesterol synthesis and fatty acid oxidation. This chain is Acetyl-CoA hydrolase (ACH1), found in Yarrowia lipolytica (strain CLIB 122 / E 150) (Yeast).